Reading from the N-terminus, the 280-residue chain is UPF0276 protein CC_2906 (280 aa).

This sequence belongs to the UPF0276 family.

This Caulobacter vibrioides (strain ATCC 19089 / CIP 103742 / CB 15) (Caulobacter crescentus) protein is UPF0276 protein CC_2906.